Reading from the N-terminus, the 321-residue chain is tRNA U34 carboxymethyltransferase (321 aa).

Residues K90, W104, K109, G129, 151 to 153 (DPT), 180 to 181 (IE), M195, Y199, and R314 each bind carboxy-S-adenosyl-L-methionine.

This sequence belongs to the class I-like SAM-binding methyltransferase superfamily. CmoB family. In terms of assembly, homotetramer.

The catalysed reaction is carboxy-S-adenosyl-L-methionine + 5-hydroxyuridine(34) in tRNA = 5-carboxymethoxyuridine(34) in tRNA + S-adenosyl-L-homocysteine + H(+). Catalyzes carboxymethyl transfer from carboxy-S-adenosyl-L-methionine (Cx-SAM) to 5-hydroxyuridine (ho5U) to form 5-carboxymethoxyuridine (cmo5U) at position 34 in tRNAs. This is tRNA U34 carboxymethyltransferase from Haemophilus influenzae (strain ATCC 51907 / DSM 11121 / KW20 / Rd).